We begin with the raw amino-acid sequence, 238 residues long: NAD(P)H-hydrate epimerase (238 aa).

Residues 11–217 (AAALDKDLMS…EIHQKYNLQL (207 aa)) form the YjeF N-terminal domain. Residue 61–65 (NNGGD) coordinates (6S)-NADPHX. K(+) is bound by residues asparagine 62 and aspartate 123. Residues 127–133 (GFSFTGS) and aspartate 156 contribute to the (6S)-NADPHX site. Serine 159 contributes to the K(+) binding site.

Belongs to the NnrE/AIBP family. The cofactor is K(+).

The protein localises to the cytoplasm. It is found in the mitochondrion. It carries out the reaction (6R)-NADHX = (6S)-NADHX. It catalyses the reaction (6R)-NADPHX = (6S)-NADPHX. Its function is as follows. Catalyzes the epimerization of the S- and R-forms of NAD(P)HX, a damaged form of NAD(P)H that is a result of enzymatic or heat-dependent hydration. This is a prerequisite for the S-specific NAD(P)H-hydrate dehydratase to allow the repair of both epimers of NAD(P)HX. This Sclerotinia sclerotiorum (strain ATCC 18683 / 1980 / Ss-1) (White mold) protein is NAD(P)H-hydrate epimerase.